The primary structure comprises 517 residues: T-complex protein 11-like protein 2 (517 aa).

Residues 1–59 (MPFNGEKQYVNEDQQSDSESSRFSESTASLSDYGCSRQSFTSDSSSKSSSPASTSPPRG) form a disordered region. Position 16 is a phosphoserine (serine 16). The span at 17-55 (DSESSRFSESTASLSDYGCSRQSFTSDSSSKSSSPASTS) shows a compositional bias: low complexity.

It belongs to the TCP11 family. Interacts with FMNL2; this interaction promotes muscle-derived satellite cell (MDSC) migration and differentiation.

The protein localises to the cytoplasm. It is found in the cytoskeleton. In terms of biological role, promotes the migration of muscle-derived satellite cells (MDSCs) during differentiation throught interaction with FMNL2 and therefore may participate in microfilament assembly. The protein is T-complex protein 11-like protein 2 of Rattus norvegicus (Rat).